Consider the following 164-residue polypeptide: MKIDASRRGILTGRWRKASNGIRPPWSGDESHFLTHCTRCDACINACENNILQRGAGGYPSVNFKNNECSFCYACAQACPESLFSPRHTRAWDLQFTIGDACLAYQSVECRRCQDSCEPMAIIFRPTLSGIYQPQLNSQLCNGCGACAASCPVSAITAEYLHAH.

3 consecutive 4Fe-4S ferredoxin-type domains span residues 28-57, 58-89, and 132-161; these read GDESHFLTHCTRCDACINACENNILQRGAG, GYPSVNFKNNECSFCYACAQACPESLFSPRHT, and YQPQLNSQLCNGCGACAASCPVSAITAEYL. The [4Fe-4S] cluster site is built by Cys37, Cys40, Cys43, Cys47, Cys69, Cys72, Cys75, Cys79, Cys141, Cys144, Cys147, and Cys151.

The protein belongs to the NapF family. In terms of assembly, interacts with the cytoplasmic NapA precursor. The cofactor is [4Fe-4S] cluster.

The protein resides in the cytoplasm. In terms of biological role, could be involved in the maturation of NapA, the catalytic subunit of the periplasmic nitrate reductase, before its export into the periplasm. In Escherichia coli O157:H7, this protein is Ferredoxin-type protein NapF.